The following is a 379-amino-acid chain: 1-deoxy-D-xylulose 5-phosphate reductoisomerase (379 aa).

T10, G11, S12, I13, R38, N39, and N121 together coordinate NADPH. K122 is a 1-deoxy-D-xylulose 5-phosphate binding site. Residue E123 coordinates NADPH. Position 147 (D147) interacts with Mn(2+). 4 residues coordinate 1-deoxy-D-xylulose 5-phosphate: S148, E149, S173, and H196. Position 149 (E149) interacts with Mn(2+). Residue G202 coordinates NADPH. 1-deoxy-D-xylulose 5-phosphate contacts are provided by S209, N214, K215, and E218. A Mn(2+)-binding site is contributed by E218.

The protein belongs to the DXR family. Mg(2+) serves as cofactor. The cofactor is Mn(2+).

The enzyme catalyses 2-C-methyl-D-erythritol 4-phosphate + NADP(+) = 1-deoxy-D-xylulose 5-phosphate + NADPH + H(+). The protein operates within isoprenoid biosynthesis; isopentenyl diphosphate biosynthesis via DXP pathway; isopentenyl diphosphate from 1-deoxy-D-xylulose 5-phosphate: step 1/6. Functionally, catalyzes the NADPH-dependent rearrangement and reduction of 1-deoxy-D-xylulose-5-phosphate (DXP) to 2-C-methyl-D-erythritol 4-phosphate (MEP). In Chlamydia muridarum (strain MoPn / Nigg), this protein is 1-deoxy-D-xylulose 5-phosphate reductoisomerase.